The chain runs to 389 residues: Succinate--CoA ligase [ADP-forming] subunit beta (389 aa).

One can recognise an ATP-grasp domain in the interval 9–244 (KQLFAEYGLP…PSQEDEREAH (236 aa)). ATP is bound by residues lysine 46, 53–55 (GRG), glutamate 99, threonine 102, and glutamate 107. Residues asparagine 199 and aspartate 213 each coordinate Mg(2+). Substrate is bound by residues asparagine 264 and 321–323 (GIV).

Belongs to the succinate/malate CoA ligase beta subunit family. In terms of assembly, heterotetramer of two alpha and two beta subunits. It depends on Mg(2+) as a cofactor.

It carries out the reaction succinate + ATP + CoA = succinyl-CoA + ADP + phosphate. It catalyses the reaction GTP + succinate + CoA = succinyl-CoA + GDP + phosphate. The protein operates within carbohydrate metabolism; tricarboxylic acid cycle; succinate from succinyl-CoA (ligase route): step 1/1. Succinyl-CoA synthetase functions in the citric acid cycle (TCA), coupling the hydrolysis of succinyl-CoA to the synthesis of either ATP or GTP and thus represents the only step of substrate-level phosphorylation in the TCA. The beta subunit provides nucleotide specificity of the enzyme and binds the substrate succinate, while the binding sites for coenzyme A and phosphate are found in the alpha subunit. The protein is Succinate--CoA ligase [ADP-forming] subunit beta of Teredinibacter turnerae (strain ATCC 39867 / T7901).